A 257-amino-acid chain; its full sequence is MPDMQKRPDHRRIPISKVGVKDISYPIVVMDKNRSLQHTVARVNMYVDLPHQFKGTHMSRFVEILNRHREQIALDKLETILEEMKARLGSASAHLEIQFPYFIDKRAPVSGARSLMEYSCEFSASLTDTLDFVLGVRVPLTSLCPCSRELAIHGAHNQRSIMTVRVRYRDFIWIEDLVELIEQCGSSPLYSLLKRVDEKYVTEQAYENPRFVEDMVREAYSRLAGMENITWFSVETENFESIHNHSAYAAVELDRRG.

It belongs to the GTP cyclohydrolase IV family.

It carries out the reaction GTP + H2O = 7,8-dihydroneopterin 3'-triphosphate + formate + H(+). It participates in cofactor biosynthesis; 7,8-dihydroneopterin triphosphate biosynthesis; 7,8-dihydroneopterin triphosphate from GTP: step 1/1. Converts GTP to 7,8-dihydroneopterin triphosphate. This chain is GTP cyclohydrolase FolE2, found in Pelobacter propionicus (strain DSM 2379 / NBRC 103807 / OttBd1).